Reading from the N-terminus, the 469-residue chain is Uronate isomerase (469 aa).

Belongs to the metallo-dependent hydrolases superfamily. Uronate isomerase family.

The enzyme catalyses D-glucuronate = D-fructuronate. It carries out the reaction aldehydo-D-galacturonate = keto-D-tagaturonate. Its pathway is carbohydrate metabolism; pentose and glucuronate interconversion. The sequence is that of Uronate isomerase from Corynebacterium efficiens (strain DSM 44549 / YS-314 / AJ 12310 / JCM 11189 / NBRC 100395).